The chain runs to 623 residues: Myosin light chain kinase 2, skeletal/cardiac muscle (623 aa).

Disordered regions lie at residues 1–179 (MATE…PSCP) and 204–251 (GVPV…QGDT). A2 is modified (N-acetylalanine). Residues 20 to 31 (APKAAAGEGPPA) are compositionally biased toward low complexity. Composition is skewed to basic and acidic residues over residues 32–43 (AEKDPGPPDPQK) and 49–89 (DPEK…EKGD). Low complexity predominate over residues 90 to 102 (GASAQPSASSQGP). Positions 150 to 159 (GEAKEQKKVA) are enriched in basic and acidic residues. Residues S169, S175, and S177 each carry the phosphoserine modification. A compositionally biased stretch (low complexity) spans 204–214 (GVPVTPGPTET). A compositionally biased stretch (basic and acidic residues) spans 215–224 (EPAKVAEGEK). A Protein kinase domain is found at 312-567 (LNSKEALGGG…AAQCLAHPWL (256 aa)). Residues 318–326 (LGGGKFGAV) and K341 contribute to the ATP site. D433 functions as the Proton acceptor in the catalytic mechanism. Position 472 is a phosphothreonine (T472). The tract at residues 601–613 (IAVSAANRFKKIS) is calmodulin-binding.

The protein belongs to the protein kinase superfamily. CAMK Ser/Thr protein kinase family. As to quaternary structure, may interact with centrin.

The protein resides in the cytoplasm. The enzyme catalyses L-seryl-[myosin light chain] + ATP = O-phospho-L-seryl-[myosin light chain] + ADP + H(+). It carries out the reaction L-threonyl-[myosin light chain] + ATP = O-phospho-L-threonyl-[myosin light chain] + ADP + H(+). In terms of biological role, implicated in the level of global muscle contraction and cardiac function. Phosphorylates a specific serine in the N-terminus of a myosin light chain. The chain is Myosin light chain kinase 2, skeletal/cardiac muscle (MYLK2) from Bos taurus (Bovine).